A 257-amino-acid chain; its full sequence is Indole-3-glycerol phosphate synthase (257 aa).

It belongs to the TrpC family.

It carries out the reaction 1-(2-carboxyphenylamino)-1-deoxy-D-ribulose 5-phosphate + H(+) = (1S,2R)-1-C-(indol-3-yl)glycerol 3-phosphate + CO2 + H2O. It functions in the pathway amino-acid biosynthesis; L-tryptophan biosynthesis; L-tryptophan from chorismate: step 4/5. This chain is Indole-3-glycerol phosphate synthase, found in Halalkalibacterium halodurans (strain ATCC BAA-125 / DSM 18197 / FERM 7344 / JCM 9153 / C-125) (Bacillus halodurans).